Here is a 244-residue protein sequence, read N- to C-terminus: ATP synthase subunit b 2 (244 aa).

Residues 2–22 traverse the membrane as a helical segment; sequence TVDWWTIGLQVINVSVLIWLL.

The protein belongs to the ATPase B chain family. As to quaternary structure, F-type ATPases have 2 components, F(1) - the catalytic core - and F(0) - the membrane proton channel. F(1) has five subunits: alpha(3), beta(3), gamma(1), delta(1), epsilon(1). F(0) has three main subunits: a(1), b(2) and c(10-14). The alpha and beta chains form an alternating ring which encloses part of the gamma chain. F(1) is attached to F(0) by a central stalk formed by the gamma and epsilon chains, while a peripheral stalk is formed by the delta and b chains.

It localises to the cell inner membrane. In terms of biological role, f(1)F(0) ATP synthase produces ATP from ADP in the presence of a proton or sodium gradient. F-type ATPases consist of two structural domains, F(1) containing the extramembraneous catalytic core and F(0) containing the membrane proton channel, linked together by a central stalk and a peripheral stalk. During catalysis, ATP synthesis in the catalytic domain of F(1) is coupled via a rotary mechanism of the central stalk subunits to proton translocation. Its function is as follows. Component of the F(0) channel, it forms part of the peripheral stalk, linking F(1) to F(0). This Gluconobacter oxydans (strain 621H) (Gluconobacter suboxydans) protein is ATP synthase subunit b 2.